A 109-amino-acid chain; its full sequence is UPF0060 membrane protein HEAR0108 (109 aa).

The next 4 helical transmembrane spans lie at 7–27 (VALF…PYLW), 33–53 (SIWL…LLSL), 63–83 (AAYG…VDGI), and 87–107 (NWDV…MFAP).

This sequence belongs to the UPF0060 family.

The protein resides in the cell inner membrane. The protein is UPF0060 membrane protein HEAR0108 of Herminiimonas arsenicoxydans.